The chain runs to 71 residues: Ubiquinol-cytochrome c reductase complex assembly factor 6 (71 aa).

The Mitochondrial matrix segment spans residues M1 to S8. The helical; Signal-anchor for type II membrane protein transmembrane segment at T9–A25 threads the bilayer. The Mitochondrial intermembrane segment spans residues E26–K71. The segment at L52–K71 is disordered.

The protein belongs to the UQCC6 family. Interacts with UQCRC1. Interacts with UQCRQ. Interacts with UQCC5. Forms a complex, named COMB/coordinator of mitochondrial CYTB biogenesis, composed of UQCC1, UQCC2, UQCC4, UQCC5 and UQCC6; stabilizes nascent cytochrome b/MT-CYB and promotes its membrane insertion. Forms a complex, named COMA, composed of UQCC1, UQCC2 and UQCC4; activates MT-CYB translation. Forms a complex, named COMC, composed of UQCC1, UQCC2; UQCC3 and UQCC4; mediates MT-CYB hemylation and association with the first nuclear-encoded complex III subunit UQCRQ. Interacts with MT-CYB.

The protein localises to the mitochondrion inner membrane. Functionally, required for the assembly and stability of the mitochondrial ubiquinol-cytochrome c reductase complex (complex III (CIII) or cytochrome b-c1 complex), a multisubunit transmembrane complex that is part of the mitochondrial electron transport chain (ETC) which drives oxidative phosphorylation. Mediates early complex III biogenesis. Participates in regulating the levels of electron transport chain proteins, and therefore energy supply, in response to changes in energy demand. Also required for cytochrome c oxidase complex (complex IV) assembly. This chain is Ubiquinol-cytochrome c reductase complex assembly factor 6, found in Pongo abelii (Sumatran orangutan).